The following is a 229-amino-acid chain: uncharacterized protein (229 aa).

The next 7 membrane-spanning stretches (helical) occupy residues 21-41 (IYSL…LMLY), 56-76 (MIYY…SGAA), 83-103 (ALPI…FIIV), 109-129 (TVFQ…IIGV), 141-161 (AMFA…FIGS), 162-182 (GMMS…LIAS), and 202-222 (WAVA…ISLL).

The protein belongs to the BI1 family.

The protein localises to the cell membrane. This is an uncharacterized protein from Streptococcus pyogenes serotype M6 (strain ATCC BAA-946 / MGAS10394).